The primary structure comprises 401 residues: Ornithine aminotransferase (401 aa).

Position 258 is an N6-(pyridoxal phosphate)lysine (lysine 258).

Belongs to the class-III pyridoxal-phosphate-dependent aminotransferase family. OAT subfamily. Pyridoxal 5'-phosphate is required as a cofactor.

The protein resides in the cytoplasm. The enzyme catalyses a 2-oxocarboxylate + L-ornithine = L-glutamate 5-semialdehyde + an L-alpha-amino acid. It functions in the pathway amino-acid biosynthesis; L-proline biosynthesis; L-glutamate 5-semialdehyde from L-ornithine: step 1/1. Functionally, catalyzes the interconversion of ornithine to glutamate semialdehyde. This Bacillus subtilis (strain 168) protein is Ornithine aminotransferase.